The following is a 262-amino-acid chain: MLICNDNLNQKTLLEEIMALRPWRKGPFEISKIKIDSEWDSSIKWDLVKNATSLKDKIVADVGCNNGYYLFKMLEHGPKSLVGFDPGVLVKKQFEFLAPFFDKEKKIIYKSLGVEDLNEKYPNAFDVIFCLGVLYHRKSPLETLKALYHALKIGGELVLDTLIIDSPLDIALCPKKTYAKMKNAYFIPSISALKGWCERVGFGDFEIISVLKTTPKEQRKTDFILGQSLEDFLDKKDHSKTLEGYDAPLRGYFKMLKSSSKR.

Residues K25, W39, K44, G63, 114 to 115 (VE), Y135, and R250 each bind carboxy-S-adenosyl-L-methionine.

The protein belongs to the class I-like SAM-binding methyltransferase superfamily. CmoB family. Homotetramer.

The enzyme catalyses carboxy-S-adenosyl-L-methionine + 5-hydroxyuridine(34) in tRNA = 5-carboxymethoxyuridine(34) in tRNA + S-adenosyl-L-homocysteine + H(+). Its function is as follows. Catalyzes carboxymethyl transfer from carboxy-S-adenosyl-L-methionine (Cx-SAM) to 5-hydroxyuridine (ho5U) to form 5-carboxymethoxyuridine (cmo5U) at position 34 in tRNAs. The sequence is that of tRNA U34 carboxymethyltransferase from Helicobacter acinonychis (strain Sheeba).